Reading from the N-terminus, the 917-residue chain is Outer membrane protein SlpA (917 aa).

Residues 1–23 (MKKRLVTLLAGLLTVLSMGFGLA) form the signal peptide. An SLH domain is found at 24–84 (QFSDVPAGHW…QQIEEELKTQ (61 aa)).

Homotrimer.

It is found in the cell outer membrane. Its function is as follows. Plays an important role in the structural organization and integrity of the cell envelope, bridging the outer membrane to the peptidoglyan layer. Appears to be a nonselective channel. In Thermus thermophilus (strain ATCC 27634 / DSM 579 / HB8), this protein is Outer membrane protein SlpA (slpA).